The sequence spans 408 residues: uncharacterized protein (408 aa).

The next 12 membrane-spanning stretches (helical) occupy residues 9-29, 49-69, 77-97, 100-120, 135-155, 167-187, 216-236, 252-272, 283-303, 308-328, 340-360, and 373-393; these read WFVL…RNSF, VSVS…GFFI, IMAL…YSPN, VFSA…VGVT, LALA…SPIW, TYTI…VFGM, LIHI…IIDA, GMMA…GWLS, SILF…ILGI, LWYF…IPLT, LIGS…ALSV, and YLLI…IELV.

This sequence belongs to the major facilitator superfamily.

Its subcellular location is the cell membrane. This is an uncharacterized protein from Bacillus subtilis (strain 168).